Reading from the N-terminus, the 277-residue chain is Hemin import ATP-binding protein HmuV (277 aa).

Positions Ile-25–Pro-260 constitute an ABC transporter domain. An ATP-binding site is contributed by Gly-57–Ser-64.

Belongs to the ABC transporter superfamily. Heme (hemin) importer (TC 3.A.1.14.5) family. In terms of assembly, the complex is composed of two ATP-binding proteins (HmuV), two transmembrane proteins (HmuU) and a solute-binding protein (HmuT).

It localises to the cell inner membrane. Functionally, part of the ABC transporter complex HmuTUV involved in hemin import. Responsible for energy coupling to the transport system. The sequence is that of Hemin import ATP-binding protein HmuV from Photobacterium profundum (strain SS9).